The chain runs to 136 residues: Late embryogenesis abundant protein D-7 (136 aa).

2 disordered regions span residues 1-108 and 117-136; these read MASH…AQGA and GMAD…TRKD. Over residues 11 to 58 the composition is skewed to basic and acidic residues; it reads GRAEGRAHEKGEQMKESMKEKAEAAKQKTMETAEAAKQKTMETAEAAK. LEA 11-mer repeat repeat units lie at residues 31-41, 42-52, 53-63, 64-74, and 75-85; these read KAEAAKQKTME, TAEAAKQKTME, TAEAAKQKTRG, AAETTNDKTKQ, and TAGAARGKAEE.

This sequence belongs to the LEA type 4 family.

Its function is as follows. LEA proteins are late embryonic proteins abundant in higher plant seed embryos. There are two subsets of LEA proteins (5a and 5b), the first ones are expressed when the cotyledon weight reach 80 mg and the second set are expressed above 100 mg. The function of those proteins is not known. The chain is Late embryogenesis abundant protein D-7 from Gossypium hirsutum (Upland cotton).